Consider the following 199-residue polypeptide: Holliday junction branch migration complex subunit RuvA (199 aa).

A domain I region spans residues 1–64 (MIGRITGILL…EDGHFLYGFA (64 aa)). Positions 65–143 (SADERAAFRQ…RALPGFGAST (79 aa)) are domain II. Residues 144 to 152 (VPGAAAQPA) form a flexible linker region. A domain III region spans residues 152–199 (ADSRSDILNALLALGYSDKEAQSALKAIPPETGVSDGIRQALKLLSKA).

The protein belongs to the RuvA family. In terms of assembly, homotetramer. Forms an RuvA(8)-RuvB(12)-Holliday junction (HJ) complex. HJ DNA is sandwiched between 2 RuvA tetramers; dsDNA enters through RuvA and exits via RuvB. An RuvB hexamer assembles on each DNA strand where it exits the tetramer. Each RuvB hexamer is contacted by two RuvA subunits (via domain III) on 2 adjacent RuvB subunits; this complex drives branch migration. In the full resolvosome a probable DNA-RuvA(4)-RuvB(12)-RuvC(2) complex forms which resolves the HJ.

It localises to the cytoplasm. Its function is as follows. The RuvA-RuvB-RuvC complex processes Holliday junction (HJ) DNA during genetic recombination and DNA repair, while the RuvA-RuvB complex plays an important role in the rescue of blocked DNA replication forks via replication fork reversal (RFR). RuvA specifically binds to HJ cruciform DNA, conferring on it an open structure. The RuvB hexamer acts as an ATP-dependent pump, pulling dsDNA into and through the RuvAB complex. HJ branch migration allows RuvC to scan DNA until it finds its consensus sequence, where it cleaves and resolves the cruciform DNA. This is Holliday junction branch migration complex subunit RuvA from Aromatoleum aromaticum (strain DSM 19018 / LMG 30748 / EbN1) (Azoarcus sp. (strain EbN1)).